Consider the following 427-residue polypeptide: MTEAMKITLSTQPADARWGEKATYSINNDGITLHLNGADDLGLIQRAARKIDGLGIKHVQLSGEGWDADRCWAFWQGYKAPKGIRKVEWPDLDDAQRQELDNRLMIIDWVRDTINAPAEELGPSQLAQRAVDLISNVAGDRVTYRITKGEDLREQGYMGLHTVGRGSERSPVLLALDYNPTGDKEAPVYACLVGKGITFDSGGYSIKQTAFMDSMKSDMGGAATVTGALAFAITRGLNKRVKLFLCCADNLISGNAFKLGDIITYRNGKKVEVMNTDAEGRLVLADGLIDASAQKPELIIDAATLTGAAKTALGNDYHALFSFDDALAGRLLASAAQENEPFWRLPLAEFHRNQLPSNFAELNNTGSAAYPAGASTAAGFLSHFVENYQQGWLHIDCSATYRKAPVEQWSAGATGLGVRTIANLLTA.

The Mn(2+) site is built by K195 and D200. The active site involves K207. Residues D218, D277, and E279 each coordinate Mn(2+). The active site involves R281.

Belongs to the peptidase M17 family. Homohexamer. Requires Mn(2+) as cofactor.

The protein resides in the cytoplasm. The enzyme catalyses Release of an N-terminal amino acid, Xaa, from a peptide or arylamide. Xaa is preferably Glu or Asp but may be other amino acids, including Leu, Met, His, Cys and Gln.. Its function is as follows. Probably plays an important role in intracellular peptide degradation. In Escherichia coli (strain UTI89 / UPEC), this protein is Peptidase B.